We begin with the raw amino-acid sequence, 466 residues long: Cysteine--tRNA ligase (466 aa).

Residue Cys-29 participates in Zn(2+) binding. Positions 31–41 match the 'HIGH' region motif; sequence PTVYNYIHIGN. Zn(2+)-binding residues include Cys-209, His-234, and Glu-238. The short motif at 266–270 is the 'KMSKS' region element; sequence KMSKS. Lys-269 lines the ATP pocket. Ser-270 carries the phosphoserine modification.

This sequence belongs to the class-I aminoacyl-tRNA synthetase family. As to quaternary structure, monomer. It depends on Zn(2+) as a cofactor.

It is found in the cytoplasm. It carries out the reaction tRNA(Cys) + L-cysteine + ATP = L-cysteinyl-tRNA(Cys) + AMP + diphosphate. This Bacillus pumilus (strain SAFR-032) protein is Cysteine--tRNA ligase.